The chain runs to 155 residues: Small ribosomal subunit protein uS7 (155 aa).

It belongs to the universal ribosomal protein uS7 family. Part of the 30S ribosomal subunit. Contacts proteins S9 and S11.

Its function is as follows. One of the primary rRNA binding proteins, it binds directly to 16S rRNA where it nucleates assembly of the head domain of the 30S subunit. Is located at the subunit interface close to the decoding center, probably blocks exit of the E-site tRNA. The protein is Small ribosomal subunit protein uS7 of Xanthomonas campestris pv. campestris (strain 8004).